Consider the following 238-residue polypeptide: 7-cyano-7-deazaguanine synthase (238 aa).

Position 14–24 (14–24) interacts with ATP; the sequence is FSGGQDSATCL. Cys-202, Cys-217, Cys-220, and Cys-223 together coordinate Zn(2+).

This sequence belongs to the QueC family. The cofactor is Zn(2+).

The catalysed reaction is 7-carboxy-7-deazaguanine + NH4(+) + ATP = 7-cyano-7-deazaguanine + ADP + phosphate + H2O + H(+). The protein operates within purine metabolism; 7-cyano-7-deazaguanine biosynthesis. Catalyzes the ATP-dependent conversion of 7-carboxy-7-deazaguanine (CDG) to 7-cyano-7-deazaguanine (preQ(0)). This is 7-cyano-7-deazaguanine synthase from Nitrobacter hamburgensis (strain DSM 10229 / NCIMB 13809 / X14).